The primary structure comprises 251 residues: Hydroxyacylglutathione hydrolase (251 aa).

7 residues coordinate Zn(2+): histidine 53, histidine 55, aspartate 57, histidine 58, histidine 110, aspartate 127, and histidine 165.

The protein belongs to the metallo-beta-lactamase superfamily. Glyoxalase II family. As to quaternary structure, monomer. It depends on Zn(2+) as a cofactor.

The enzyme catalyses an S-(2-hydroxyacyl)glutathione + H2O = a 2-hydroxy carboxylate + glutathione + H(+). It participates in secondary metabolite metabolism; methylglyoxal degradation; (R)-lactate from methylglyoxal: step 2/2. Its function is as follows. Thiolesterase that catalyzes the hydrolysis of S-D-lactoyl-glutathione to form glutathione and D-lactic acid. This Yersinia enterocolitica serotype O:8 / biotype 1B (strain NCTC 13174 / 8081) protein is Hydroxyacylglutathione hydrolase.